Reading from the N-terminus, the 291-residue chain is Phytanoyl-CoA dioxygenase domain-containing protein 1 (291 aa).

Threonine 55 is modified (phosphothreonine). 2-oxoglutarate is bound by residues lysine 102, methionine 141, histidine 156 to aspartate 158, and tryptophan 174. Histidine 156 and aspartate 158 together coordinate Fe cation. Histidine 246 serves as a coordination point for Fe cation. Serine 248 and arginine 257 together coordinate 2-oxoglutarate.

It belongs to the PhyH family. PHYHD1 subfamily. The cofactor is Fe cation.

Its activity is regulated as follows. Activity is increased by ascorbate. Inhibited by myristoyl-CoA. In terms of biological role, 2-oxoglutarate(2OG)-dependent dioxygenase that catalyzes the conversion of 2-oxoglutarate to succinate and CO(2) in an iron-dependent manner. However, does not couple 2OG turnover to the hydroxylation of acyl-coenzyme A derivatives, implying that it is not directly involved in phytanoyl coenzyme-A metabolism. Does not show detectable activity towards fatty acid CoA thioesters. Functionally, isoform 2 probably lacks enzyme activity. Its function is as follows. Isoform 3 probably lacks enzyme activity. This chain is Phytanoyl-CoA dioxygenase domain-containing protein 1, found in Homo sapiens (Human).